The primary structure comprises 142 residues: Large ribosomal subunit protein uL13 (142 aa).

This sequence belongs to the universal ribosomal protein uL13 family. Part of the 50S ribosomal subunit.

In terms of biological role, this protein is one of the early assembly proteins of the 50S ribosomal subunit, although it is not seen to bind rRNA by itself. It is important during the early stages of 50S assembly. The sequence is that of Large ribosomal subunit protein uL13 from Shewanella oneidensis (strain ATCC 700550 / JCM 31522 / CIP 106686 / LMG 19005 / NCIMB 14063 / MR-1).